Consider the following 637-residue polypeptide: ATP-dependent zinc metalloprotease FtsH (637 aa).

The Cytoplasmic segment spans residues 1 to 44; sequence MAKHSQHSSPPRKLFDTLNDLWQRAKSEAGLSAEGPEGTRRRNN. The chain crosses the membrane as a helical span at residues 45–65; that stretch reads LILYLLLVLSTLYLLNGYQTL. The Periplasmic segment spans residues 66–141; sequence RNEEIPYSEF…TVRYGSNWFS (76 aa). The helical transmembrane segment at 142-162 threads the bilayer; that stretch reads SLIFNWIVPIVLLTLFWTWMA. Over 163 to 637 the chain is Cytoplasmic; sequence RRMTGGRGFL…VKAVIREAAS (475 aa). 231–238 contacts ATP; the sequence is GPPGTGKT. His-454 lines the Zn(2+) pocket. Glu-455 is a catalytic residue. Residues His-458 and Asp-531 each contribute to the Zn(2+) site.

The protein in the central section; belongs to the AAA ATPase family. It in the C-terminal section; belongs to the peptidase M41 family. As to quaternary structure, homohexamer. Requires Zn(2+) as cofactor.

The protein resides in the cell inner membrane. Acts as a processive, ATP-dependent zinc metallopeptidase for both cytoplasmic and membrane proteins. Plays a role in the quality control of integral membrane proteins. The sequence is that of ATP-dependent zinc metalloprotease FtsH from Methylococcus capsulatus (strain ATCC 33009 / NCIMB 11132 / Bath).